A 98-amino-acid polypeptide reads, in one-letter code: MPAIEVGRLCVKTRGREAGRKCVIVEIIDDNFVLITGPKDVSGVKRRRANINHIEVLPEKINIQPGASDEEVKKALEEAGLLDFMRERVRIELKPGLL.

It belongs to the eukaryotic ribosomal protein eL14 family.

This Hyperthermus butylicus (strain DSM 5456 / JCM 9403 / PLM1-5) protein is Large ribosomal subunit protein eL14.